A 209-amino-acid polypeptide reads, in one-letter code: Large ribosomal subunit protein uL3 (209 aa).

Glutamine 150 is modified (N5-methylglutamine).

The protein belongs to the universal ribosomal protein uL3 family. As to quaternary structure, part of the 50S ribosomal subunit. Forms a cluster with proteins L14 and L19. In terms of processing, methylated by PrmB.

One of the primary rRNA binding proteins, it binds directly near the 3'-end of the 23S rRNA, where it nucleates assembly of the 50S subunit. This chain is Large ribosomal subunit protein uL3, found in Photobacterium profundum (strain SS9).